The sequence spans 975 residues: Homeobox protein cut-like 1 (975 aa).

The CUT 1 DNA-binding region spans 1–73; the sequence is SRQVKEQLIK…ILALRSIQGR (73 aa). Disordered regions lie at residues 90–113 and 126–148; these read PKRRNGSEGNITTRIRASETGSDE and LQVQKTAEPAQPSSTSSSGTSDD. Residues 113-169 are a coiled coil; the sequence is EAIKSILEQAKRELQVQKTAEPAQPSSTSSSGTSDDAIRSILQQARREMEAQQAALD. S207 bears the Phosphoserine mark. The disordered stretch occupies residues 209–246; it reads KKPPTAPDTSASTLPNPPALKKESQDAPGLDLPGAAES. Residues K229, K255, and K286 each participate in a glycyl lysine isopeptide (Lys-Gly) (interchain with G-Cter in SUMO2) cross-link. Over residues 262–297 the composition is skewed to basic and acidic residues; that stretch reads GVWKDHWWSTVQPERKSAAPPEDAKSEEAGGTKEKG. The tract at residues 262–369 is disordered; that stretch reads GVWKDHWWST…SKPAKPSVPP (108 aa). A compositionally biased stretch (polar residues) spans 328–351; it reads RTPQSSELSLTGASRSETPQNSPL. S349 is modified (phosphoserine). The CUT 2 DNA-binding region spans 374-461; that stretch reads QYEIYMYQEV…QGVLPVQGQQ (88 aa). The span at 476-489 shows a compositional bias: polar residues; sequence LQQGCVSSESTPKT. The segment at 476 to 549 is disordered; the sequence is LQQGCVSSES…SQPATPLPLS (74 aa). Over residues 490–506 the composition is skewed to low complexity; the sequence is SASCSPAPESPMSSSES. A phosphoserine mark is found at S499 and S509. Residues 557 to 644 constitute a DNA-binding region (CUT 3); sequence QELVAMSPEL…VEKLMDMKRM (88 aa). Residues 652–687 are disordered; it reads RRHSSVSDSQPCEPPSVGIDYSQGASPQPQHQLKKP. The segment at residues 684–743 is a DNA-binding region (homeobox); sequence LKKPRVVLAPEEKEALKRAYQQKPYPSPKTIEELATQLNLKTSTVINWFHNYRSRIRREL. S710 bears the Phosphoserine mark. K724 is covalently cross-linked (Glycyl lysine isopeptide (Lys-Gly) (interchain with G-Cter in SUMO2)). The interval 752 to 949 is disordered; the sequence is SQGQAGARHS…DSRDNPLRKK (198 aa). Residues 756 to 773 are compositionally biased toward low complexity; that stretch reads AGARHSPSARSSGAAPSS. Phosphoserine is present on S777. Low complexity predominate over residues 780-813; it reads GVEAAEGPGAADAEESAPAAAAKSQGGPAEAAVA. The segment covering 838-847 has biased composition (gly residues); that stretch reads PGRRGGGGPA. Low complexity predominate over residues 850 to 860; the sequence is APAAPAAAARG. Positions 861–890 are enriched in basic residues; that stretch reads PSRRPGARAKPRRRRRRRRRHARGGGRRYL. Positions 907–929 are enriched in low complexity; it reads RSSALPSTSAPAAARRPSSLQSL. S925 bears the Phosphoserine mark. Basic and acidic residues predominate over residues 937-946; it reads GARDSRDNPL. Residues S956 and S966 each carry the phosphoserine modification.

Belongs to the CUT homeobox family. As to quaternary structure, interacts with BANP. As cells progress into S phase, a fraction of CUX1 molecules is proteolytically processed into N-terminally truncated proteins of 110 kDa by CTSL. Cell cycle-dependent processing of CUX1 serves to generate a CDP/Cux p110 with distinct DNA binding and transcriptional properties. Post-translationally, phosphorylated by PKA. A broad pattern of expression observed in tissues of diverse origins, such as cartilage, liver, brain, lung, heart and skeletal muscle. There are 2 distinct protein species: the larger one (230-250 kDa) is found mainly in adult brain, lung and heart, and the smaller one (180-190 kDa) predominates in early embryonic tissues.

It localises to the nucleus. Functionally, transcription factor involved in the control of neuronal differentiation in the brain. Regulates dendrite development and branching, and dendritic spine formation in cortical layers II-III. Also involved in the control of synaptogenesis. In addition, it has probably a broad role in mammalian development as a repressor of developmentally regulated gene expression. May act by preventing binding of positively-activing CCAAT factors to promoters. Component of nf-munr repressor; binds to the matrix attachment regions (MARs) (5' and 3') of the immunoglobulin heavy chain enhancer. Represses T-cell receptor (TCR) beta enhancer function by binding to MARbeta, an ATC-rich DNA sequence located upstream of the TCR beta enhancer. Binds to the TH enhancer; may require the basic helix-loop-helix protein TCF4 as a coactivator. In terms of biological role, plays a role in cell cycle progression, in particular at the G1/S transition. As cells progress into S phase, a fraction of CUX1 molecules is proteolytically processed into N-terminally truncated proteins of 110 kDa. While CUX1 only transiently binds to DNA and carries the CCAAT-displacement activity, CDP/Cux p110 makes a stable interaction with DNA and stimulates expression of genes such as POLA1. This is Homeobox protein cut-like 1 (CUX1) from Canis lupus familiaris (Dog).